A 184-amino-acid polypeptide reads, in one-letter code: ATP synthase subunit b, chloroplastic (184 aa).

The chain crosses the membrane as a helical span at residues 27–49; that stretch reads LATNPINLSVVLGVLIFFGKGVL.

The protein belongs to the ATPase B chain family. F-type ATPases have 2 components, F(1) - the catalytic core - and F(0) - the membrane proton channel. F(1) has five subunits: alpha(3), beta(3), gamma(1), delta(1), epsilon(1). F(0) has four main subunits: a(1), b(1), b'(1) and c(10-14). The alpha and beta chains form an alternating ring which encloses part of the gamma chain. F(1) is attached to F(0) by a central stalk formed by the gamma and epsilon chains, while a peripheral stalk is formed by the delta, b and b' chains.

It is found in the plastid. It localises to the chloroplast thylakoid membrane. Functionally, f(1)F(0) ATP synthase produces ATP from ADP in the presence of a proton or sodium gradient. F-type ATPases consist of two structural domains, F(1) containing the extramembraneous catalytic core and F(0) containing the membrane proton channel, linked together by a central stalk and a peripheral stalk. During catalysis, ATP synthesis in the catalytic domain of F(1) is coupled via a rotary mechanism of the central stalk subunits to proton translocation. Its function is as follows. Component of the F(0) channel, it forms part of the peripheral stalk, linking F(1) to F(0). This is ATP synthase subunit b, chloroplastic from Gossypium barbadense (Sea Island cotton).